The chain runs to 162 residues: Peroxiredoxin-2 (162 aa).

A Thioredoxin domain is found at 4-162 (IAVGDVLPDG…SSADDILKDL (159 aa)). Cys51 acts as the Cysteine sulfenic acid (-SOH) intermediate in catalysis.

Belongs to the peroxiredoxin family. Prx5 subfamily. As to quaternary structure, monomer. Homodimer. Glutathionylation of C(P) causes the dimer to dissociate. Subsequent reduction of the mixed disulfide bond leads again to dimerization.

It catalyses the reaction [glutaredoxin]-dithiol + a hydroperoxide = [glutaredoxin]-disulfide + an alcohol + H2O. Thiol-specific peroxidase that catalyzes the reduction of hydrogen peroxide and organic hydroperoxides to water and alcohols, respectively. Can reduce H(2)O(2) and short chain organic, fatty acid, and phospholipid hydroperoxides. Plays a role in cell protection against oxidative stress by detoxifying peroxides. This Populus trichocarpa (Western balsam poplar) protein is Peroxiredoxin-2.